A 252-amino-acid chain; its full sequence is Putative endonuclease C1F12.06c (252 aa).

Aspartate 43 and aspartate 114 together coordinate Mg(2+).

The protein belongs to the endonuclease V family.

The protein resides in the cytoplasm. The protein localises to the nucleus. The chain is Putative endonuclease C1F12.06c from Schizosaccharomyces pombe (strain 972 / ATCC 24843) (Fission yeast).